Reading from the N-terminus, the 203-residue chain is Small ribosomal subunit protein uS4 (203 aa).

The region spanning 93-156 is the S4 RNA-binding domain; the sequence is QRLDNVVYRL…MKVPAILEAV (64 aa).

Belongs to the universal ribosomal protein uS4 family. In terms of assembly, part of the 30S ribosomal subunit. Contacts protein S5. The interaction surface between S4 and S5 is involved in control of translational fidelity.

Its function is as follows. One of the primary rRNA binding proteins, it binds directly to 16S rRNA where it nucleates assembly of the body of the 30S subunit. Functionally, with S5 and S12 plays an important role in translational accuracy. This Lactococcus lactis subsp. cremoris (strain MG1363) protein is Small ribosomal subunit protein uS4.